Here is a 330-residue protein sequence, read N- to C-terminus: Zinc finger protein Gfi-1b (330 aa).

Positions 1–20 (MPRSFLVKSKKAHTYHQPRA) are SNAG domain. Disordered stretches follow at residues 1-21 (MPRS…PRAQ) and 75-99 (MASA…SESP). Lys8 bears the N6,N6-dimethyllysine mark. Positions 91–330 (GESPLSESPP…RHRESQHNLK (240 aa)) are interaction with ARIH2. 6 C2H2-type zinc fingers span residues 163–186 (YHCV…RRSH), 192–214 (FACD…THVH), 220–242 (FECR…LLIH), 248–270 (YPCQ…TYIH), 276–298 (HKCQ…SRKH), and 304–327 (FSCE…ESQH). A mediates interaction with GATA1 region spans residues 164–330 (HCVKCNKVFS…RHRESQHNLK (167 aa)).

Interacts with histone methyltransferases EHMT2 and SUV39H1. Interacts with ARIH2 (via RING-type 2) and with RUNX1T1. Forms a complex with GATA1. Component of a RCOR-GFI-KDM1A-HDAC complex. Interacts directly with RCOR1, KDM1A and HDAC2. In terms of processing, methylation at Lys-8 in the SNAG domain seems required for the recruitment of the corepressor complex. As to expression, expressed in bone marrow and in spleen. Detected in hematopoietic stem cells, erythroblasts, and megakaryocytes. Expressed in thymocytes.

Its subcellular location is the nucleus. In terms of biological role, essential proto-oncogenic transcriptional regulator necessary for development and differentiation of erythroid and megakaryocytic lineages. Component of a RCOR-GFI-KDM1A-HDAC complex that suppresses, via histone deacetylase (HDAC) recruitment, a number of genes implicated in multilineage blood cell development and controls hematopoietic differentiation. Transcriptional repressor or activator depending on both promoter and cell type context; represses promoter activity of SOCS1 and SOCS3 and thus, may regulate cytokine signaling pathways. Cooperates with GATA1 to repress target gene transcription, such as the apoptosis regulator BCL2L1; GFI1B silencing in leukemic cell lines markedly increase apoptosis rate. Inhibits down-regulation of MYC and MYB as well as the cyclin-dependent kinase inhibitor CDKN1A/P21WAF1 in IL6-treated myelomonocytic cells. Represses expression of GATA3 in T-cell lymphomas and inhibits GATA1-mediated transcription; as GATA1 also mediates erythroid GFI1B transcription, both GATA1 and GFI1B participate in a feedback regulatory pathway controlling the expression of GFI1B gene in erythroid cells. Suppresses GATA1-mediated stimulation of GFI1B promoter through protein interaction. Binds to gamma-satellite DNA and to its own promoter, auto-repressing its own expression. Alters histone methylation by recruiting histone methyltransferase to target genes promoters. Plays a role in heterochromatin formation. This is Zinc finger protein Gfi-1b (Gfi1b) from Mus musculus (Mouse).